The sequence spans 204 residues: Ubiquitin-conjugating enzyme E2 T (204 aa).

The UBC core domain occupies Gln2 to Arg152. Cys86 acts as the Glycyl thioester intermediate in catalysis. Glycyl lysine isopeptide (Lys-Gly) (interchain with G-Cter in ubiquitin) cross-links involve residues Lys91 and Lys181. A disordered region spans residues His150–Ser204. Residues Lys190 and Lys191 each participate in a glycyl lysine isopeptide (Lys-Gly) (interchain with G-Cter in SUMO2) cross-link. Ser193 is modified (phosphoserine).

Belongs to the ubiquitin-conjugating enzyme family. As to quaternary structure, interacts with FANCL and BRCA1. In terms of processing, auto-ubiquitinated. Effects of auto-monoubiquitination at Lys-91 and Lys-181 are unclear.

The protein resides in the nucleus. It carries out the reaction S-ubiquitinyl-[E1 ubiquitin-activating enzyme]-L-cysteine + [E2 ubiquitin-conjugating enzyme]-L-cysteine = [E1 ubiquitin-activating enzyme]-L-cysteine + S-ubiquitinyl-[E2 ubiquitin-conjugating enzyme]-L-cysteine.. Its pathway is protein modification; protein ubiquitination. Its function is as follows. Accepts ubiquitin from the E1 complex and catalyzes its covalent attachment to other proteins. Catalyzes monoubiquitination. Involved in mitomycin-C (MMC)-induced DNA repair: acts as a specific E2 ubiquitin-conjugating enzyme for the Fanconi anemia complex by associating with E3 ubiquitin-protein ligase FANCL and catalyzing monoubiquitination of FANCD2, a key step in the DNA damage pathway. Also mediates monoubiquitination of FANCL and FANCI. May contribute to ubiquitination and degradation of BRCA1. In vitro able to promote polyubiquitination using all 7 ubiquitin Lys residues, but may prefer 'Lys-11'-, 'Lys-27'-, 'Lys-48'- and 'Lys-63'-linked polyubiquitination. The polypeptide is Ubiquitin-conjugating enzyme E2 T (Ube2t) (Mus musculus (Mouse)).